We begin with the raw amino-acid sequence, 356 residues long: Adenine deaminase (356 aa).

Zn(2+)-binding residues include His23, His25, and His211. Glu214 serves as the catalytic Proton donor. Zn(2+) is bound at residue Asp292. Position 293 (Asp293) interacts with substrate.

Belongs to the metallo-dependent hydrolases superfamily. Adenosine and AMP deaminases family. Adenine deaminase type 2 subfamily. It depends on Zn(2+) as a cofactor.

It is found in the cytoplasm. The protein localises to the nucleus. It carries out the reaction adenine + H2O + H(+) = hypoxanthine + NH4(+). In terms of biological role, catalyzes the hydrolytic deamination of adenine to hypoxanthine. Plays an important role in the purine salvage pathway and in nitrogen catabolism. This Candida albicans (strain SC5314 / ATCC MYA-2876) (Yeast) protein is Adenine deaminase.